Here is a 459-residue protein sequence, read N- to C-terminus: Serine--tRNA ligase (459 aa).

Residue 254-256 (TAE) coordinates L-serine. Residues 285–287 (RKE) and Val-301 contribute to the ATP site. Glu-308 is a binding site for L-serine. 372 to 375 (EMVS) lines the ATP pocket. Thr-408 contributes to the L-serine binding site.

This sequence belongs to the class-II aminoacyl-tRNA synthetase family. Type-1 seryl-tRNA synthetase subfamily. In terms of assembly, homodimer. The tRNA molecule binds across the dimer.

Its subcellular location is the cytoplasm. The enzyme catalyses tRNA(Ser) + L-serine + ATP = L-seryl-tRNA(Ser) + AMP + diphosphate + H(+). It carries out the reaction tRNA(Sec) + L-serine + ATP = L-seryl-tRNA(Sec) + AMP + diphosphate + H(+). Its pathway is aminoacyl-tRNA biosynthesis; selenocysteinyl-tRNA(Sec) biosynthesis; L-seryl-tRNA(Sec) from L-serine and tRNA(Sec): step 1/1. Functionally, catalyzes the attachment of serine to tRNA(Ser). Is also able to aminoacylate tRNA(Sec) with serine, to form the misacylated tRNA L-seryl-tRNA(Sec), which will be further converted into selenocysteinyl-tRNA(Sec). This is Serine--tRNA ligase from Staphylothermus marinus (strain ATCC 43588 / DSM 3639 / JCM 9404 / F1).